Consider the following 158-residue polypeptide: Cytosine deaminase (158 aa).

A CMP/dCMP-type deaminase domain is found at 9-129 (KWDQKGMDIA…KYLQTRGHEV (121 aa)). Substrate is bound at residue asparagine 51. Residue histidine 62 participates in Zn(2+) binding. Residue glutamate 64 is the Proton donor of the active site. Positions 91 and 94 each coordinate Zn(2+). A substrate-binding site is contributed by aspartate 155.

Belongs to the cytidine and deoxycytidylate deaminase family. As to quaternary structure, homodimer. Requires Zn(2+) as cofactor.

It localises to the cytoplasm. It is found in the nucleus. It catalyses the reaction cytosine + H2O + H(+) = uracil + NH4(+). Its pathway is pyrimidine metabolism; UMP biosynthesis via salvage pathway; uracil from cytosine: step 1/1. Its function is as follows. Catalyzes the hydrolytic deamination of cytosine to uracil or 5-methylcytosine to thymine. Is involved in the pyrimidine salvage pathway, which allows the cell to utilize cytosine for pyrimidine nucleotide synthesis. The chain is Cytosine deaminase from Saccharomyces cerevisiae (strain ATCC 204508 / S288c) (Baker's yeast).